An 87-amino-acid chain; its full sequence is FXYD domain-containing ion transport regulator 3 (87 aa).

Residues M1–A20 form the signal peptide. Topologically, residues N21 to Q38 are extracellular. The chain crosses the membrane as a helical span at residues V39–A59. Topologically, residues K60 to S87 are cytoplasmic. A disordered region spans residues G66 to S87.

This sequence belongs to the FXYD family. Regulatory subunit of the sodium/potassium-transporting ATPase which is composed of a catalytic alpha subunit, a non-catalytic beta subunit and an additional regulatory subunit. Interacts with catalytic alpha subunit ATP1A1. Also interacts with non-catalytic beta subunit ATP1B1. Interacts with the ATP1A1-ATP1B1, ATP1A2-ATP1B1 and ATP1A3-ATP1B1 NKA isozymes. In terms of processing, glutathionylated. Isoform 1: Expressed mainly in differentiated cells (at protein level). Isoform 2: Expressed mainly in undifferentiated cells (at protein level).

It is found in the cell membrane. Associates with and regulates the activity of the sodium/potassium-transporting ATPase (NKA) which transports Na(+) out of the cell and K(+) into the cell. Reduces glutathionylation of the NKA beta-1 subunit ATP1B1, thus reversing glutathionylation-mediated inhibition of ATP1B1. Induces a hyperpolarization-activated chloride current when expressed in Xenopus oocytes. Its function is as follows. Decreases the apparent K+ and Na+ affinity of the sodium/potassium-transporting ATPase over a large range of membrane potentials. In terms of biological role, decreases the apparent K+ affinity of the sodium/potassium-transporting ATPase only at slightly negative and positive membrane potentials and increases the apparent Na+ affinity over a large range of membrane potentials. The protein is FXYD domain-containing ion transport regulator 3 (FXYD3) of Homo sapiens (Human).